Consider the following 545-residue polypeptide: Beta-sesquiphellandrene synthase (545 aa).

5 residues coordinate Mg(2+): D299, D303, N443, S447, and E451. Residues 299 to 303 (DDIMD) carry the DDXXD motif motif.

The protein belongs to the terpene synthase family. Mg(2+) serves as cofactor. It depends on Mn(2+) as a cofactor.

The protein resides in the cytoplasm. It carries out the reaction (2E,6E)-farnesyl diphosphate = beta-sesquiphellandrene + diphosphate. The protein operates within secondary metabolite biosynthesis; terpenoid biosynthesis. Its function is as follows. Sesquiterpene synthase converting farnesyl diphosphate into beta-sesquiphellandrene and six minor products, zingiberene, 7-epi-sesquithujene, sesquisabinene A, (E)-alpha-bergamotene, (E)-beta-farnesene and beta-bisabolene. Can also accept geranyl diphosphate as substrate, producing nine monoterpenes, with myrcene and limonene as the major products. This Sorghum bicolor (Sorghum) protein is Beta-sesquiphellandrene synthase (TPS2).